A 359-amino-acid polypeptide reads, in one-letter code: Peptide chain release factor 1 (359 aa).

An N5-methylglutamine modification is found at Q236.

The protein belongs to the prokaryotic/mitochondrial release factor family. In terms of processing, methylated by PrmC. Methylation increases the termination efficiency of RF1.

Its subcellular location is the cytoplasm. Its function is as follows. Peptide chain release factor 1 directs the termination of translation in response to the peptide chain termination codons UAG and UAA. The polypeptide is Peptide chain release factor 1 (Streptococcus pneumoniae (strain Taiwan19F-14)).